A 647-amino-acid chain; its full sequence is Nucleoside triphosphatase I (647 aa).

One can recognise a Helicase ATP-binding domain in the interval 48–212 (FIGLKNLNSM…NNLIGLLRPN (165 aa)). 61–68 (WDTGTGKT) contributes to the ATP binding site. A DEXH box motif is present at residues 150-153 (DEVH). Residues 378–541 (YIEACRIILN…KINVVFDLLK (164 aa)) enclose the Helicase C-terminal domain. Residues 467–533 (DIIILDMPWN…DIIKNKQGKI (67 aa)) are binding to the cap-specific mRNA (nucleoside-2'-O-)-methyltransferase.

It belongs to the helicase family. NPH I subfamily. In terms of assembly, monomer. Interacts (via C-terminus) with RAP94 (via N-terminus). Interacts with the cap-specific mRNA (nucleoside-2'-O-)-methyltransferase.

It is found in the virion. The catalysed reaction is a ribonucleoside 5'-triphosphate + H2O = a ribonucleoside 5'-diphosphate + phosphate + H(+). Functionally, DNA-dependent ATPase required for providing the needed energy to achieve the termination of early transcripts. Acts in concert with the RAP94 subunit of the virion RNA polymerase and the capping enzyme/VTF to catalyze release of UUUUUNU-containing nascent RNA from the elongation complex. NPH-I must bind ssDNA in order to exhibit ATPase activity. The protein is Nucleoside triphosphatase I (NPH1) of Choristoneura fumiferana (Spruce budworm moth).